A 420-amino-acid chain; its full sequence is UDP-glucuronic acid decarboxylase 1 (420 aa).

N-acetylmethionine is present on M1. The Cytoplasmic portion of the chain corresponds to 1–19; that stretch reads MVSKALLRLVSAVNRRRMK. A helical; Signal-anchor for type II membrane protein transmembrane segment spans residues 20 to 40; that stretch reads LLLGIALLAYVASVWGNFVNM. The Lumenal segment spans residues 41–420; that stretch reads RSIQENGELK…RIKKGRTRHN (380 aa). T94 carries the post-translational modification Phosphothreonine. The NAD(+) site is built by G98, F99, V100, D119, N120, F122, T123, G124, D144, and V145. UDP-alpha-D-glucuronate contacts are provided by L149 and Y150. Residues L159 and S161 each contribute to the NAD(+) site. K177 contributes to the UDP-alpha-D-glucuronate binding site. T178 contributes to the NAD(+) binding site. 4 residues coordinate UDP-alpha-D-glucuronate: N185, G188, K191, and R192. Positions 200, 231, and 235 each coordinate NAD(+). The Proton acceptor role is filled by Y231. Residues Y245, Q248, and E249 each contribute to the UDP-alpha-D-glucuronate site. 3 residues coordinate NAD(+): T261, H267, and R272. N-linked (GlcNAc...) asparagine glycosylation occurs at N316.

The protein belongs to the NAD(P)-dependent epimerase/dehydratase family. UDP-glucuronic acid decarboxylase subfamily. As to quaternary structure, homodimer and homotetramer. Interacts with AKT1. The cofactor is NAD(+).

The protein localises to the golgi apparatus. It is found in the golgi stack membrane. The enzyme catalyses UDP-alpha-D-glucuronate + H(+) = UDP-alpha-D-xylose + CO2. The protein operates within nucleotide-sugar biosynthesis; UDP-alpha-D-xylose biosynthesis; UDP-alpha-D-xylose from UDP-alpha-D-glucuronate: step 1/1. Catalyzes the NAD-dependent decarboxylation of UDP-glucuronic acid to UDP-xylose. Necessary for the biosynthesis of the core tetrasaccharide in glycosaminoglycan biosynthesis. The polypeptide is UDP-glucuronic acid decarboxylase 1 (UXS1) (Pongo abelii (Sumatran orangutan)).